The primary structure comprises 370 residues: 3-dehydroquinate synthase (370 aa).

NAD(+) is bound by residues 112-116 (GVIGD), 136-137 (TT), lysine 149, lysine 158, and 176-179 (TLAT). Zn(2+) contacts are provided by glutamate 191, histidine 254, and histidine 276.

Belongs to the sugar phosphate cyclases superfamily. Dehydroquinate synthase family. Requires Co(2+) as cofactor. The cofactor is Zn(2+). It depends on NAD(+) as a cofactor.

The protein localises to the cytoplasm. The catalysed reaction is 7-phospho-2-dehydro-3-deoxy-D-arabino-heptonate = 3-dehydroquinate + phosphate. It functions in the pathway metabolic intermediate biosynthesis; chorismate biosynthesis; chorismate from D-erythrose 4-phosphate and phosphoenolpyruvate: step 2/7. In terms of biological role, catalyzes the conversion of 3-deoxy-D-arabino-heptulosonate 7-phosphate (DAHP) to dehydroquinate (DHQ). The polypeptide is 3-dehydroquinate synthase (Xylella fastidiosa (strain M12)).